We begin with the raw amino-acid sequence, 506 residues long: Transcriptional coactivator YAP1 (506 aa).

Residues 1–38 (MDPGPPPPAAPPQAQGPPSAPPPPGQAPPSAPGPPAPP) show a composition bias toward pro residues. The segment at 1 to 60 (MDPGPPPPAAPPQAQGPPSAPPPPGQAPPSAPGPPAPPGSQAAPQAPPAGHQIVHVRGDS) is disordered. The span at 39–50 (GSQAAPQAPPAG) shows a compositional bias: low complexity. Ser-60 is modified (phosphoserine). Thr-62 bears the Phosphothreonine mark. Residues 90-112 (LPDSFFKPPEPKAHSRQASTDAG) are disordered. 2 positions are modified to phosphoserine: Ser-104 and Ser-108. Phosphothreonine occurs at positions 109 and 118. A phosphoserine mark is found at Ser-126, Ser-127, Ser-130, and Ser-137. The segment at 132-160 (QLGAVSPGTLTPTGVSSGPAAAPSAQHLR) is disordered. Positions 147 to 156 (SSGPAAAPSA) are enriched in low complexity. Phosphoserine is present on Ser-163. WW domains follow at residues 170–204 (VPLP…PRKA) and 230–263 (PLPD…PRLD). Phosphoserine is present on residues Ser-273, Ser-288, Ser-369, Ser-373, Ser-384, Ser-390, Ser-399, Ser-402, and Ser-405. 2 disordered regions span residues 274–307 (QSAP…MRLQ) and 356–416 (TLEQ…RTPD). Pro residues predominate over residues 279–289 (KQPPPLAPQSP). Residues 290-506 (PGVLGGGGSS…LDKESFLTWL (217 aa)) are transactivation domain. Polar residues predominate over residues 371–393 (GMSQELRTMTTSGSDPFLNSGTY). A compositionally biased stretch (polar residues) spans 401–411 (DSGLSMSSYSV). A Phosphotyrosine modification is found at Tyr-409. Thr-414 bears the Phosphothreonine mark.

Belongs to the YAP1 family. In terms of assembly, binds to the SH3 domain of the YES kinase. Binds to WBP1 and WBP2. Binds, in vitro, through the WW1 domain, to neural isoforms of ENAH that contain the PPSY motif. The phosphorylated form interacts with YWHAB. Interacts (via WW domains) with LATS1 (via PPxY motif 2). Interacts with LATS2. Interacts with TEAD1, TEAD2 and TEAD3. Interacts wih TEAD4. Interacts with TP73. Interacts with RUNX1. Interacts with HCK. Interacts (via WW domains) with PTPN14 (via PPxY motif 2); this interaction leads to the cytoplasmic sequestration of YAP1 and inhibits its transcriptional coactivator activity. Interacts (when phosphorylated at Ser-112) with SMAD2, SMAD3 and WWTR1. Interacts with PRRG2 (via cytoplasmic domain). Interacts (via WW domains) with PRRG4 (via cytoplasmic domain). Interacts (phosphorylated) with CLDN18; the interaction sequesters YAP1 away from the nucleus and thereby restricts transcription of YAP1 target genes. Interacts with SMAD1. Interacts with AMOT; the interaction facilitates translocation of YAP1 to the cytoplasm and tight junctions. Interacts with AMOTL2, the interaction is required for ubiquitination of AMOTL2 and localization of YAP1 to tight junctions. Post-translationally, phosphorylated by LATS1 and LATS2; leading to cytoplasmic translocation and inactivation. Phosphorylated by ABL1; leading to YAP1 stabilization, enhanced interaction with TP73 and recruitment onto proapoptotic genes; in response to DNA damage. Phosphorylation at Ser-402 and Ser-405 by CK1 is triggered by previous phosphorylation at Ser-399 by LATS proteins and leads to YAP1 ubiquitination by SCF(beta-TRCP) E3 ubiquitin ligase and subsequent degradation. Phosphorylated at Thr-118, Ser-137, Ser-369 and Thr-414 by MAPK8/JNK1 and MAPK9/JNK2, which is required for the regulation of apoptosis by YAP1. Phosphorylated in the nucleus by PRP4K; phosphorylation leads to nuclear exclusion. In terms of processing, ubiquitinated by SCF(beta-TRCP) E3 ubiquitin ligase.

It is found in the cytoplasm. The protein localises to the nucleus. Its subcellular location is the cell junction. The protein resides in the tight junction. Transcriptional regulator with dual roles as a coactivator and corepressor. Critical downstream regulatory target in the Hippo signaling pathway, crucial for organ size control and tumor suppression by restricting proliferation and promoting apoptosis. The Hippo signaling pathway core involves a kinase cascade featuring STK3/MST2 and STK4/MST1, along with its regulatory partner SAV1, which phosphorylates and activates LATS1/2 in complex with their regulatory protein, MOB1. This activation leads to the phosphorylation and inactivation of the YAP1 oncoprotein and WWTR1/TAZ. Phosphorylation of YAP1 by LATS1/2 prevents its nuclear translocation, thereby regulating the expression of its target genes. The transcriptional regulation of gene expression requires TEAD transcription factors and modulates cell growth, anchorage-independent growth, and induction of epithelial-mesenchymal transition (EMT). Plays a key role in tissue tension and 3D tissue shape by regulating the cortical actomyosin network, acting via ARHGAP18, a Rho GTPase activating protein that suppresses F-actin polymerization. It also suppresses ciliogenesis by acting as a transcriptional corepressor of TEAD4 target genes AURKA and PLK1. In conjunction with WWTR1, regulates TGFB1-dependent SMAD2 and SMAD3 nuclear accumulation. Synergizes with WBP2 to enhance PGR activity. The sequence is that of Transcriptional coactivator YAP1 (YAP1) from Canis lupus familiaris (Dog).